Reading from the N-terminus, the 294-residue chain is Bifunctional protein FolD (294 aa).

NADP(+) contacts are provided by residues 166-168 (GRS), serine 195, and isoleucine 236.

The protein belongs to the tetrahydrofolate dehydrogenase/cyclohydrolase family. Homodimer.

The enzyme catalyses (6R)-5,10-methylene-5,6,7,8-tetrahydrofolate + NADP(+) = (6R)-5,10-methenyltetrahydrofolate + NADPH. It carries out the reaction (6R)-5,10-methenyltetrahydrofolate + H2O = (6R)-10-formyltetrahydrofolate + H(+). It participates in one-carbon metabolism; tetrahydrofolate interconversion. Catalyzes the oxidation of 5,10-methylenetetrahydrofolate to 5,10-methenyltetrahydrofolate and then the hydrolysis of 5,10-methenyltetrahydrofolate to 10-formyltetrahydrofolate. The sequence is that of Bifunctional protein FolD from Chloroherpeton thalassium (strain ATCC 35110 / GB-78).